A 681-amino-acid chain; its full sequence is Potassium-transporting ATPase ATP-binding subunit (681 aa).

4 helical membrane passes run 30-50 (LLVY…FFGI), 59-79 (LAIA…EAIA), 216-236 (ILLV…LPFT), and 255-275 (IALL…SIGI). Residue aspartate 306 is the 4-aspartylphosphate intermediate of the active site. Residues aspartate 343, glutamate 347, 376-383 (FTATTRMS), and lysine 394 contribute to the ATP site. Positions 517 and 521 each coordinate Mg(2+). Helical transmembrane passes span 587–607 (FAII…LNLM), 615–635 (AILS…PLSL), and 661–681 (LIAP…LGIV).

The protein belongs to the cation transport ATPase (P-type) (TC 3.A.3) family. Type IA subfamily. As to quaternary structure, the system is composed of three essential subunits: KdpA, KdpB and KdpC.

The protein resides in the cell membrane. It catalyses the reaction K(+)(out) + ATP + H2O = K(+)(in) + ADP + phosphate + H(+). Functionally, part of the high-affinity ATP-driven potassium transport (or Kdp) system, which catalyzes the hydrolysis of ATP coupled with the electrogenic transport of potassium into the cytoplasm. This subunit is responsible for energy coupling to the transport system and for the release of the potassium ions to the cytoplasm. This Listeria monocytogenes serovar 1/2a (strain ATCC BAA-679 / EGD-e) protein is Potassium-transporting ATPase ATP-binding subunit.